We begin with the raw amino-acid sequence, 417 residues long: Serine hydroxymethyltransferase (417 aa).

(6S)-5,6,7,8-tetrahydrofolate is bound by residues L120 and 124-126 (GHL). An N6-(pyridoxal phosphate)lysine modification is found at K229. Position 354–356 (354–356 (SPF)) interacts with (6S)-5,6,7,8-tetrahydrofolate.

It belongs to the SHMT family. As to quaternary structure, homodimer. Pyridoxal 5'-phosphate is required as a cofactor.

The protein resides in the cytoplasm. It catalyses the reaction (6R)-5,10-methylene-5,6,7,8-tetrahydrofolate + glycine + H2O = (6S)-5,6,7,8-tetrahydrofolate + L-serine. It functions in the pathway one-carbon metabolism; tetrahydrofolate interconversion. Its pathway is amino-acid biosynthesis; glycine biosynthesis; glycine from L-serine: step 1/1. Its function is as follows. Catalyzes the reversible interconversion of serine and glycine with tetrahydrofolate (THF) serving as the one-carbon carrier. This reaction serves as the major source of one-carbon groups required for the biosynthesis of purines, thymidylate, methionine, and other important biomolecules. Also exhibits THF-independent aldolase activity toward beta-hydroxyamino acids, producing glycine and aldehydes, via a retro-aldol mechanism. The sequence is that of Serine hydroxymethyltransferase from Acinetobacter baylyi (strain ATCC 33305 / BD413 / ADP1).